The chain runs to 213 residues: Flagellin A1 (213 aa).

The propeptide occupies 1 to 10; it reads MFENINEDRG. 3 N-linked (GlcNAc...) asparagine glycosylation sites follow: asparagine 70, asparagine 115, and asparagine 172.

This sequence belongs to the archaeal flagellin family. Glycosylated by a pentasaccharide similar to the S-layer glycoprotein, probably comprising a hexose, 2 hexuronic acids, a methyl ester of a hexuronic acid and mannose. Glycosylation is required for biosynthesis of stable flagella.

Its subcellular location is the archaeal flagellum. Functionally, major flagellin required for motility. Not involved in PibD-dependent surface adhesion. Much more abundant in cells compared to FlgA2. The polypeptide is Flagellin A1 (flgA1) (Haloferax volcanii (strain ATCC 29605 / DSM 3757 / JCM 8879 / NBRC 14742 / NCIMB 2012 / VKM B-1768 / DS2) (Halobacterium volcanii)).